Consider the following 238-residue polypeptide: Dolichyldiphosphatase 1 (238 aa).

A run of 4 helical transmembrane segments spans residues 33–53 (LAYL…LIIF), 100–120 (PSSH…FLYL), 130–150 (FLDL…AFLV), and 162–182 (WSQV…WFAF).

The protein belongs to the dolichyldiphosphatase family.

The protein localises to the endoplasmic reticulum membrane. It carries out the reaction a di-trans,poly-cis-dolichyl diphosphate + H2O = a di-trans,poly-cis-dolichyl phosphate + phosphate + H(+). Its pathway is protein modification; protein glycosylation. Required for efficient N-glycosylation. Necessary for maintaining optimal levels of dolichol-linked oligosaccharides. Hydrolyzes dolichyl pyrophosphate at a very high rate and dolichyl monophosphate at a much lower rate. Does not act on phosphatidate. The sequence is that of Dolichyldiphosphatase 1 (DOLPP1) from Rhinolophus ferrumequinum (Greater horseshoe bat).